Reading from the N-terminus, the 201-residue chain is Twin horsetail protein 2 (201 aa).

The protein resides in the nucleus. In terms of biological role, required for correct meiotic chromosome segregation and recombination. The chain is Twin horsetail protein 2 (tht2) from Schizosaccharomyces pombe (strain 972 / ATCC 24843) (Fission yeast).